The sequence spans 747 residues: Polyribonucleotide nucleotidyltransferase (747 aa).

Positions 502 and 508 each coordinate Mg(2+). The KH domain occupies 569–628 (PRMLTITIDPDKIRDIIGPGGKIIKKIIEETGVEIDVEDDGRVFIASTDAAAGERALKII). In terms of domain architecture, S1 motif spans 638-712 (GKVYNGKVTR…PQGRLKLSRK (75 aa)). The disordered stretch occupies residues 718 to 747 (STVGEGGHRHFRRAGREGGHRGLNNRRQSR).

The protein belongs to the polyribonucleotide nucleotidyltransferase family. Mg(2+) serves as cofactor.

Its subcellular location is the cytoplasm. The enzyme catalyses RNA(n+1) + phosphate = RNA(n) + a ribonucleoside 5'-diphosphate. In terms of biological role, involved in mRNA degradation. Catalyzes the phosphorolysis of single-stranded polyribonucleotides processively in the 3'- to 5'-direction. The polypeptide is Polyribonucleotide nucleotidyltransferase (Moorella thermoacetica (strain ATCC 39073 / JCM 9320)).